The chain runs to 155 residues: Small ribosomal subunit protein uS7 (155 aa).

It belongs to the universal ribosomal protein uS7 family. In terms of assembly, part of the 30S ribosomal subunit. Contacts proteins S9 and S11.

One of the primary rRNA binding proteins, it binds directly to 16S rRNA where it nucleates assembly of the head domain of the 30S subunit. Is located at the subunit interface close to the decoding center, probably blocks exit of the E-site tRNA. In Mycoplasma genitalium (strain ATCC 33530 / DSM 19775 / NCTC 10195 / G37) (Mycoplasmoides genitalium), this protein is Small ribosomal subunit protein uS7.